The sequence spans 600 residues: ATP-dependent lipid A-core flippase (600 aa).

The next 4 helical transmembrane spans lie at 27-47 (ISLF…QPML), 83-103 (LLII…NYFL), 174-194 (LLFM…LIAV), and 267-287 (PLLQ…VLYL). The 292-residue stretch at 31–322 (LISIVGFLIF…LSEVSSTIQK (292 aa)) folds into the ABC transmembrane type-1 domain. Positions 354–590 (LDVRNLSFTY…NGYYARLNAM (237 aa)) constitute an ABC transporter domain. 388 to 395 (GRSGSGKS) contributes to the ATP binding site.

This sequence belongs to the ABC transporter superfamily. Lipid exporter (TC 3.A.1.106) family. Homodimer.

It is found in the cell inner membrane. The catalysed reaction is ATP + H2O + lipid A-core oligosaccharideSide 1 = ADP + phosphate + lipid A-core oligosaccharideSide 2.. Functionally, involved in lipopolysaccharide (LPS) biosynthesis. Translocates lipid A-core from the inner to the outer leaflet of the inner membrane. Transmembrane domains (TMD) form a pore in the inner membrane and the ATP-binding domain (NBD) is responsible for energy generation. The chain is ATP-dependent lipid A-core flippase from Pseudomonas fluorescens (strain Pf0-1).